The chain runs to 609 residues: Threonine--tRNA ligase (609 aa).

Residues 1-143 (MRVLYLHTER…SFKPGDSRAE (143 aa)) form an editing domain region. 2 catalytic regions span residues 195–491 (PRYL…PRLP) and 196–491 (RYLE…PRLP). Zn(2+)-binding residues include Cys288, His339, and His460.

This sequence belongs to the class-II aminoacyl-tRNA synthetase family. In terms of assembly, homodimer. Zn(2+) serves as cofactor.

It localises to the cytoplasm. It carries out the reaction tRNA(Thr) + L-threonine + ATP = L-threonyl-tRNA(Thr) + AMP + diphosphate + H(+). Functionally, catalyzes the attachment of threonine to tRNA(Thr) in a two-step reaction: L-threonine is first activated by ATP to form Thr-AMP and then transferred to the acceptor end of tRNA(Thr). Also edits incorrectly charged L-seryl-tRNA(Thr). This chain is Threonine--tRNA ligase, found in Pyrobaculum neutrophilum (strain DSM 2338 / JCM 9278 / NBRC 100436 / V24Sta) (Thermoproteus neutrophilus).